The following is a 458-amino-acid chain: UDP-N-acetylmuramate--L-alanine ligase (458 aa).

115-121 (GSHGKTT) contacts ATP.

It belongs to the MurCDEF family.

It localises to the cytoplasm. The catalysed reaction is UDP-N-acetyl-alpha-D-muramate + L-alanine + ATP = UDP-N-acetyl-alpha-D-muramoyl-L-alanine + ADP + phosphate + H(+). It participates in cell wall biogenesis; peptidoglycan biosynthesis. In terms of biological role, cell wall formation. The polypeptide is UDP-N-acetylmuramate--L-alanine ligase (Anaeromyxobacter dehalogenans (strain 2CP-1 / ATCC BAA-258)).